Reading from the N-terminus, the 349-residue chain is Green-sensitive opsin-3 (349 aa).

At 1–36 (MNGTEGNNFYIPMSNRTGLVRSPYEYPQYYLAEPWQ) the chain is on the extracellular side. 2 N-linked (GlcNAc...) asparagine glycosylation sites follow: Asn2 and Asn15. Residues 37–61 (FKLLAVYMFFLMCFGFPINGLTLVV) form a helical membrane-spanning segment. Residues 62–73 (TAQHKKLRQPLN) lie on the Cytoplasmic side of the membrane. The helical transmembrane segment at 74–99 (FILVNLAVAGTIMVCFGFTVTFYTAI) threads the bilayer. Residues 100-113 (NGYFVLGPTGCAIE) lie on the Extracellular side of the membrane. An intrachain disulfide couples Cys110 to Cys187. Residues 114–133 (GFMATLGGQISLWSLVVLAI) traverse the membrane as a helical segment. Residues 134 to 152 (ERYIVVCKPMGSFKFSSNH) lie on the Cytoplasmic side of the membrane. Residues 153 to 176 (AFAGIGFTWIMALSCAAPPLVGWS) traverse the membrane as a helical segment. The Extracellular portion of the chain corresponds to 177-202 (RYIPEGMQCSCGPDYYTLNPDYNNES). A glycan (N-linked (GlcNAc...) asparagine) is linked at Asn200. Residues 203-230 (YVLYMFCCHFIFPVTTIFFTYGRLVCTV) traverse the membrane as a helical segment. At 231–252 (KAAAAQQQESESTQKAEREVTR) the chain is on the cytoplasmic side. Residues 253 to 276 (MVILMVLGFLVAWTPYASVAAWIF) form a helical membrane-spanning segment. The Extracellular portion of the chain corresponds to 277-284 (FNRGAAFS). The chain crosses the membrane as a helical span at residues 285 to 309 (AQFMAVPAFFSKSSSIFNPIIYVLL). Lys296 carries the N6-(retinylidene)lysine modification. Residues 310–349 (NKQFRNCMLTTLFCGKNPLGDDESSTVSTSKTEVSSVSPA) lie on the Cytoplasmic side of the membrane. The segment at 329–349 (GDDESSTVSTSKTEVSSVSPA) is disordered. Positions 334–349 (STVSTSKTEVSSVSPA) are enriched in low complexity.

It belongs to the G-protein coupled receptor 1 family. Opsin subfamily. In terms of processing, phosphorylated on some or all of the serine and threonine residues present in the C-terminal region.

The protein resides in the membrane. In terms of biological role, visual pigments are the light-absorbing molecules that mediate vision. They consist of an apoprotein, opsin, covalently linked to cis-retinal. In Danio rerio (Zebrafish), this protein is Green-sensitive opsin-3 (opn1mw3).